The following is an 878-amino-acid chain: Bifunctional heparan sulfate N-deacetylase/N-sulfotransferase 1 (878 aa).

At 1–17 (MSLSLKTRRFGRPVRPQ) the chain is on the cytoplasmic side. The tract at residues 1 to 169 (MSLSLKTRRF…VEYGVGIIGF (169 aa)) is sufficient for localization to Golgi membrane. Residues 18-38 (LVLLLLFALCLLSVFISAYYL) traverse the membrane as a helical; Signal-anchor for type II membrane protein segment. The Lumenal segment spans residues 39-878 (YGWKRGLEPS…WLREELQNTR (840 aa)). The interval 40-594 (GWKRGLEPSG…KRHKDIWSKE (555 aa)) is heparan sulfate N-deacetylase 1. 3 N-linked (GlcNAc...) asparagine glycosylation sites follow: N231, N347, and N397. The interval 595-878 (KTCDRFPKLL…WLREELQNTR (284 aa)) is heparan sulfate N-sulfotransferase 1. The active-site For sulfotransferase activity is the K610. 610–614 (KTGTT) is an adenosine 3',5'-bisphosphate binding site. Residue N663 is glycosylated (N-linked (GlcNAc...) asparagine). Adenosine 3',5'-bisphosphate-binding residues include S708 and W813. Cysteines 814 and 824 form a disulfide. Adenosine 3',5'-bisphosphate is bound at residue 829–833 (KGRKY).

It belongs to the sulfotransferase 1 family. NDST subfamily. In terms of assembly, monomer.

The protein resides in the golgi apparatus membrane. It localises to the golgi apparatus. Its subcellular location is the trans-Golgi network membrane. The enzyme catalyses alpha-D-glucosaminyl-[heparan sulfate](n) + 3'-phosphoadenylyl sulfate = N-sulfo-alpha-D-glucosaminyl-[heparan sulfate](n) + adenosine 3',5'-bisphosphate + 2 H(+). Its pathway is glycan metabolism; heparan sulfate biosynthesis. It participates in glycan metabolism; heparin biosynthesis. Its function is as follows. Essential bifunctional enzyme that catalyzes both the N-deacetylation and the N-sulfation of glucosamine (GlcNAc) of the glycosaminoglycan in heparan sulfate. Modifies the GlcNAc-GlcA disaccharide repeating sugar backbone to make N-sulfated heparosan, a prerequisite substrate for later modifications in heparin biosynthesis. Plays a role in determining the extent and pattern of sulfation of heparan sulfate. The sequence is that of Bifunctional heparan sulfate N-deacetylase/N-sulfotransferase 1 (ndst1) from Xenopus laevis (African clawed frog).